Consider the following 195-residue polypeptide: Proteasome subunit beta 1 (195 aa).

The propeptide at 1 to 6 (MEELPA) is removed in mature form; by autocatalysis. Threonine 7 functions as the Nucleophile in the catalytic mechanism.

This sequence belongs to the peptidase T1B family. The 20S proteasome core is composed of 14 alpha and 14 beta subunits that assemble into four stacked heptameric rings, resulting in a barrel-shaped structure. The two inner rings, each composed of seven catalytic beta subunits, are sandwiched by two outer rings, each composed of seven alpha subunits. The catalytic chamber with the active sites is on the inside of the barrel. Has a gated structure, the ends of the cylinder being occluded by the N-termini of the alpha-subunits. Is capped at one or both ends by the proteasome regulatory ATPase, PAN.

The protein localises to the cytoplasm. The enzyme catalyses Cleavage of peptide bonds with very broad specificity.. Its activity is regulated as follows. The formation of the proteasomal ATPase PAN-20S proteasome complex, via the docking of the C-termini of PAN into the intersubunit pockets in the alpha-rings, triggers opening of the gate for substrate entry. Interconversion between the open-gate and close-gate conformations leads to a dynamic regulation of the 20S proteasome proteolysis activity. Component of the proteasome core, a large protease complex with broad specificity involved in protein degradation. This is Proteasome subunit beta 1 from Sulfolobus acidocaldarius (strain ATCC 33909 / DSM 639 / JCM 8929 / NBRC 15157 / NCIMB 11770).